Here is a 236-residue protein sequence, read N- to C-terminus: Leucyl/phenylalanyl-tRNA--protein transferase (236 aa).

It belongs to the L/F-transferase family.

It localises to the cytoplasm. It catalyses the reaction N-terminal L-lysyl-[protein] + L-leucyl-tRNA(Leu) = N-terminal L-leucyl-L-lysyl-[protein] + tRNA(Leu) + H(+). The enzyme catalyses N-terminal L-arginyl-[protein] + L-leucyl-tRNA(Leu) = N-terminal L-leucyl-L-arginyl-[protein] + tRNA(Leu) + H(+). The catalysed reaction is L-phenylalanyl-tRNA(Phe) + an N-terminal L-alpha-aminoacyl-[protein] = an N-terminal L-phenylalanyl-L-alpha-aminoacyl-[protein] + tRNA(Phe). Its function is as follows. Functions in the N-end rule pathway of protein degradation where it conjugates Leu, Phe and, less efficiently, Met from aminoacyl-tRNAs to the N-termini of proteins containing an N-terminal arginine or lysine. The chain is Leucyl/phenylalanyl-tRNA--protein transferase from Shewanella oneidensis (strain ATCC 700550 / JCM 31522 / CIP 106686 / LMG 19005 / NCIMB 14063 / MR-1).